We begin with the raw amino-acid sequence, 321 residues long: MSPSLVTLNSLMYIIPILIAVAFLTLTERKILGYMQHRKGPNITGPHGLLQPIADGLKLFIKEPVRPLNASPTLLILSPLLAITAAMLIWAPIPMPYSLANLNLGLLSILAISGMAVNSILWAGWASNSKYALIGSLRAVAQTISYEVTLGIILLSTLVLTGGFTIQLLTITQKYTWLLTTSWPLTMMWFISTLAETNRAPFDLTEGESELVSGFNVEYAGGPFALFFLAEYANIITMNLLTCILFINPGPSQYPELFLANLIAKTTILCLSFLWIRASYPRFRYDQLMHLLWKQFLPMTMALCLLHASLSISISGLPPHP.

Transmembrane regions (helical) follow at residues 5 to 25 (LVTL…AFLT), 74 to 94 (LLIL…APIP), 104 to 124 (LGLL…LWAG), 151 to 171 (GIIL…LLTI), 175 to 195 (YTWL…STLA), 227 to 247 (FFLA…ILFI), 256 to 276 (ELFL…FLWI), and 296 to 316 (FLPM…SISG).

It belongs to the complex I subunit 1 family.

It is found in the mitochondrion inner membrane. The catalysed reaction is a ubiquinone + NADH + 5 H(+)(in) = a ubiquinol + NAD(+) + 4 H(+)(out). Functionally, core subunit of the mitochondrial membrane respiratory chain NADH dehydrogenase (Complex I) that is believed to belong to the minimal assembly required for catalysis. Complex I functions in the transfer of electrons from NADH to the respiratory chain. The immediate electron acceptor for the enzyme is believed to be ubiquinone. The polypeptide is NADH-ubiquinone oxidoreductase chain 1 (MT-ND1) (Varanus baritji (Black-spotted ridge-tailed monitor)).